We begin with the raw amino-acid sequence, 659 residues long: MMDVKLKIQQLVNLIKNYDYHYYVLSEPLIDDFEYDMLYKSLQQLEKDHPDLIQIDSPTQRVGGEAVKGFKKLNHNSPMLSLENAFSTKEIANFIDNINFQTNSKNEFVVEPKIDGVSISLTYKNGVLVHALTRGDGSVGEDVLNNVKTIKSIPLTIPFTKTIEIRGEIFVDKKTFLAINNQLEKPFANARNLAAGTIRNLNSEITAQRKLRALFYYIPNGLEESITTQTMVLEQLKQWKFPVSDTIRVFQNKFQLINYLEAFDKKREQLTFNLDGLVIKLNSLLFYQQLGATSKSPRWAIAFKFSPKFVQTKLTAVLITIGRTGRVNYTAKLESVNLDGTKVTAATLHNFDYIKTKDIRINDTVVIYKAGEIIPKVLKVNLEKRKNDTIIIQEQKYCPSCNSKLVKIVDEVDQYCTNETCKERNIQLINYFVSKTAMDINGLNINTITKLYEHNLVRSIVDLYDLKDKKNQVLKLDLKIGDKLFNKLVDNIENSKQKGMARLLTGLGIKHVGNVLAKNLANHFKNIKALQHASLENLISLNDVGITVAESLYNWFHDPNHLQLIEQLELRQVKTDQLPLKINFETNSIYFQKRFLITGSFNISRDQIKDLLSAKFDCQFASEVKPTVDFVIAGNKPTLRKINHAKELNIPIINEAIWT.

Residues 32–36 (DFEYD), 81–82 (SL), and Glu111 contribute to the NAD(+) site. The N6-AMP-lysine intermediate role is filled by Lys113. Arg134, Glu168, Lys280, and Lys304 together coordinate NAD(+). Zn(2+) is bound by residues Cys398, Cys401, Cys416, and Cys421. The region spanning 585-655 (ETNSIYFQKR…KELNIPIINE (71 aa)) is the BRCT domain.

It belongs to the NAD-dependent DNA ligase family. LigA subfamily. Mg(2+) serves as cofactor. The cofactor is Mn(2+).

The catalysed reaction is NAD(+) + (deoxyribonucleotide)n-3'-hydroxyl + 5'-phospho-(deoxyribonucleotide)m = (deoxyribonucleotide)n+m + AMP + beta-nicotinamide D-nucleotide.. DNA ligase that catalyzes the formation of phosphodiester linkages between 5'-phosphoryl and 3'-hydroxyl groups in double-stranded DNA using NAD as a coenzyme and as the energy source for the reaction. It is essential for DNA replication and repair of damaged DNA. This chain is DNA ligase, found in Mycoplasma genitalium (strain ATCC 33530 / DSM 19775 / NCTC 10195 / G37) (Mycoplasmoides genitalium).